A 105-amino-acid polypeptide reads, in one-letter code: Nitrogenase-stabilizing/protective protein NifW 1 (105 aa).

The protein belongs to the NifW family. Homotrimer; associates with NifD.

May protect the nitrogenase Fe-Mo protein from oxidative damage. This is Nitrogenase-stabilizing/protective protein NifW 1 from Trichormus variabilis (strain ATCC 29413 / PCC 7937) (Anabaena variabilis).